The following is a 342-amino-acid chain: Phosphoribosylformylglycinamidine cyclo-ligase (342 aa).

Belongs to the AIR synthase family.

The protein localises to the cytoplasm. It catalyses the reaction 2-formamido-N(1)-(5-O-phospho-beta-D-ribosyl)acetamidine + ATP = 5-amino-1-(5-phospho-beta-D-ribosyl)imidazole + ADP + phosphate + H(+). It functions in the pathway purine metabolism; IMP biosynthesis via de novo pathway; 5-amino-1-(5-phospho-D-ribosyl)imidazole from N(2)-formyl-N(1)-(5-phospho-D-ribosyl)glycinamide: step 2/2. The polypeptide is Phosphoribosylformylglycinamidine cyclo-ligase (Latilactobacillus sakei subsp. sakei (strain 23K) (Lactobacillus sakei subsp. sakei)).